The sequence spans 419 residues: Serine hydroxymethyltransferase (419 aa).

(6S)-5,6,7,8-tetrahydrofolate is bound by residues Leu121 and 125–127; that span reads GHL. Residue Lys229 is modified to N6-(pyridoxal phosphate)lysine.

It belongs to the SHMT family. In terms of assembly, homodimer. The cofactor is pyridoxal 5'-phosphate.

The protein localises to the cytoplasm. The enzyme catalyses (6R)-5,10-methylene-5,6,7,8-tetrahydrofolate + glycine + H2O = (6S)-5,6,7,8-tetrahydrofolate + L-serine. It participates in one-carbon metabolism; tetrahydrofolate interconversion. Its pathway is amino-acid biosynthesis; glycine biosynthesis; glycine from L-serine: step 1/1. Its function is as follows. Catalyzes the reversible interconversion of serine and glycine with tetrahydrofolate (THF) serving as the one-carbon carrier. This reaction serves as the major source of one-carbon groups required for the biosynthesis of purines, thymidylate, methionine, and other important biomolecules. Also exhibits THF-independent aldolase activity toward beta-hydroxyamino acids, producing glycine and aldehydes, via a retro-aldol mechanism. This Histophilus somni (strain 2336) (Haemophilus somnus) protein is Serine hydroxymethyltransferase.